Here is a 443-residue protein sequence, read N- to C-terminus: Trigger factor (443 aa).

In terms of domain architecture, PPIase FKBP-type spans Lys163 to Pro249.

Belongs to the FKBP-type PPIase family. Tig subfamily.

The protein localises to the cytoplasm. It carries out the reaction [protein]-peptidylproline (omega=180) = [protein]-peptidylproline (omega=0). Its function is as follows. Involved in protein export. Acts as a chaperone by maintaining the newly synthesized protein in an open conformation. Functions as a peptidyl-prolyl cis-trans isomerase. This is Trigger factor from Desulfosudis oleivorans (strain DSM 6200 / JCM 39069 / Hxd3) (Desulfococcus oleovorans).